The following is a 405-amino-acid chain: Prostaglandin E2 receptor EP1 subtype (405 aa).

Topologically, residues 1–39 (MSPYGLNLSLVDEATTCVTPRVPNTSVVLPTGGNGTSPA) are extracellular. N-linked (GlcNAc...) asparagine glycans are attached at residues N7, N24, and N34. A helical membrane pass occupies residues 40-62 (LPIFSMTLGAVSNVLALALLAQV). Residues 63 to 80 (AGRLRRRRSTATFLLFVA) are Cytoplasmic-facing. A helical transmembrane segment spans residues 81-99 (SLLAIDLAGHVIPGALVLR). Residues 100–113 (LYTAGRAPAGGACH) are Extracellular-facing. C112 and C190 form a disulfide bridge. The chain crosses the membrane as a helical span at residues 114 to 135 (FLGGCMVFFGLCPLLLGCGMAV). Residues 136 to 157 (ERCVGVTQPLIHAARVSVARAR) are Cytoplasmic-facing. A helical membrane pass occupies residues 158–179 (LALALLAAMALAVALLPLVHVG). At 180–202 (HYELQYPGTWCFISLGPPGGWRQ) the chain is on the extracellular side. Residues 203–228 (ALLAGLFAGLGLAALLAALVCNTLSG) traverse the membrane as a helical segment. Topologically, residues 229-301 (LALLRARWRR…HAHDVEMVGQ (73 aa)) are cytoplasmic. The helical transmembrane segment at 302-323 (LVGIMVVSCICWSPLLVLVVLA) threads the bilayer. The Extracellular portion of the chain corresponds to 324-337 (IGGWNSNSLQRPLF). Residues 338 to 357 (LAVRLASWNQILDPWVYILL) form a helical membrane-spanning segment. The Cytoplasmic portion of the chain corresponds to 358-405 (RQAMLRQLLRLLPLRVSAKGGPTELSLTKSAWEASSLRSSRHSGFSHL).

Belongs to the G-protein coupled receptor 1 family. Post-translationally, phosphorylated. Highly abundant in kidney and lung. Found in a lesser extent in spleen, colon, and thymus. Also expressed in uterine myometrium and endometrium.

The protein localises to the cell membrane. Its function is as follows. Receptor for prostaglandin E2 (PGE2). The activity of this receptor is mediated by G(q) proteins which activate a phosphatidylinositol-calcium second messenger system. May play a role as an important modulator of renal function. Implicated the smooth muscle contractile response to PGE2 in various tissues. Isoform 1 and isoform 2 have identical ligand binding properties, but isoform 2 lacks coupling to calcium mobilization and may therefore attenuate the action of PGE2 on tissues. The sequence is that of Prostaglandin E2 receptor EP1 subtype (Ptger1) from Rattus norvegicus (Rat).